We begin with the raw amino-acid sequence, 539 residues long: CTP synthase (539 aa).

Residues 1 to 267 (MTKFIFVTGG…DDLVIKRLDL (267 aa)) form an amidoligase domain region. Ser-13 serves as a coordination point for CTP. Residue Ser-13 participates in UTP binding. 14–19 (SLGKGI) contributes to the ATP binding site. Tyr-54 lines the L-glutamine pocket. Asp-71 serves as a coordination point for ATP. Residues Asp-71 and Glu-141 each contribute to the Mg(2+) site. Residues 148 to 150 (DIE), 188 to 193 (KTKPTQ), and Lys-224 each bind CTP. Residues 188–193 (KTKPTQ) and Lys-224 each bind UTP. Residue 240–242 (RDA) coordinates ATP. The Glutamine amidotransferase type-1 domain maps to 293 to 535 (TIGLVGKYVS…IEAANKYKEA (243 aa)). Gly-355 serves as a coordination point for L-glutamine. Cys-382 acts as the Nucleophile; for glutamine hydrolysis in catalysis. Residues 383–386 (LGMQ), Glu-406, and Arg-463 contribute to the L-glutamine site. Residues His-508 and Glu-510 contribute to the active site.

This sequence belongs to the CTP synthase family. In terms of assembly, homotetramer.

It catalyses the reaction UTP + L-glutamine + ATP + H2O = CTP + L-glutamate + ADP + phosphate + 2 H(+). It carries out the reaction L-glutamine + H2O = L-glutamate + NH4(+). The catalysed reaction is UTP + NH4(+) + ATP = CTP + ADP + phosphate + 2 H(+). Its pathway is pyrimidine metabolism; CTP biosynthesis via de novo pathway; CTP from UDP: step 2/2. Its activity is regulated as follows. Allosterically activated by GTP, when glutamine is the substrate; GTP has no effect on the reaction when ammonia is the substrate. The allosteric effector GTP functions by stabilizing the protein conformation that binds the tetrahedral intermediate(s) formed during glutamine hydrolysis. Inhibited by the product CTP, via allosteric rather than competitive inhibition. Functionally, catalyzes the ATP-dependent amination of UTP to CTP with either L-glutamine or ammonia as the source of nitrogen. Regulates intracellular CTP levels through interactions with the four ribonucleotide triphosphates. The protein is CTP synthase of Staphylococcus carnosus (strain TM300).